Consider the following 547-residue polypeptide: Inositol 1,4,5-trisphosphate receptor-interacting protein (547 aa).

Residues 1 to 15 form the signal peptide; the sequence is MAMGLFRVCLVVVTA. Residues 16–83 lie on the Extracellular side of the membrane; the sequence is IINHPLLFPR…EEGRQQNETR (68 aa). Asparagine 27 and asparagine 80 each carry an N-linked (GlcNAc...) asparagine glycan. The stretch at 32 to 82 forms a coiled coil; the sequence is ENEEEIIRKMQAHQEKLQLEQLRLEEEVARLAAEKEALEQVAEEGRQQNET. Residues 84–100 form a helical membrane-spanning segment; that stretch reads VAWDLWSTLCMILFLMI. Residues 101–547 are Cytoplasmic-facing; sequence EVWRQDHQEG…VPSDQPTPKS (447 aa). Positions 109-129 are disordered; that stretch reads EGPSPECLGGEEDELPGLGGA. A Phosphoserine modification is found at serine 547.

This sequence belongs to the ITPRIP family. Interacts with ITPR. Detected in brain where it is concentrated in cerebellar Purkinje cells (at protein level).

It localises to the cell membrane. The protein localises to the nucleus outer membrane. Enhances Ca(2+)-mediated inhibition of inositol 1,4,5-triphosphate receptor (ITPR) Ca(2+) release. This Homo sapiens (Human) protein is Inositol 1,4,5-trisphosphate receptor-interacting protein (ITPRIP).